An 861-amino-acid polypeptide reads, in one-letter code: Methyltransferase/ribosomally synthesized type III borosin cyclic peptide precursor aboMAa (861 aa).

A methyltransferase domain region spans residues 1 to 279; it reads MSSPAVETKV…AISTFYLPPK (279 aa). Residues arginine 100, tyrosine 104, and tyrosine 126 contribute to the active site. 8 residues coordinate S-adenosyl-L-methionine: tyrosine 126, histidine 128, valine 131, alanine 158, glutamine 200, alanine 241, serine 272, and threonine 273. The interval 280–408 is clasp domain; it reads ALSPLHEESA…GLVRSVMKTS (129 aa). The type III-specific C-terminal domain stretch occupies residues 409–799; the sequence is PEDVAKQFVQ…PPDLEELPIP (391 aa). Disordered stretches follow at residues 575–596 and 772–801; these read NGAFPSGGGGGSGGGGGSSSQG and EAAEKDSAVDDEKFADEEPPDLEELPIPDA. The segment covering 579 to 593 has biased composition (gly residues); the sequence is PSGGGGGSGGGGGSS. Residues 772–783 show a composition bias toward basic and acidic residues; sequence EAAEKDSAVDDE. Residues 784 to 797 show a composition bias toward acidic residues; that stretch reads KFADEEPPDLEELP. Residues valine 805 and valine 807 each carry the N-methylvaline modification. 9 consecutive repeat copies span residues 805 to 809, 810 to 814, 815 to 819, 820 to 824, 825 to 829, 830 to 834, 835 to 839, 840 to 844, and 845 to 849. The 10 X 5 AA tandem repeats of VDVTD stretch occupies residues 805–854; it reads VDVTDVDVTDVDVTDVDVTDVDVTDVDVTDVDVTDVDVTDVDVTDVDVVD. Position 808 is an N-methylthreonine (threonine 808). N-methylvaline occurs at positions 810 and 812. Threonine 813 is subject to N-methylthreonine. An N-methylvaline mark is found at valine 815 and valine 817. Threonine 818 is modified (N-methylthreonine). Residues valine 820 and valine 822 each carry the N-methylvaline modification. The residue at position 823 (threonine 823) is an N-methylthreonine. An N-methylvaline mark is found at valine 825 and valine 827. At threonine 828 the chain carries N-methylthreonine. Residues valine 830 and valine 832 each carry the N-methylvaline modification. The residue at position 833 (threonine 833) is an N-methylthreonine. The 10; approximate repeat unit spans residues 850–854; the sequence is VDVVD.

This sequence in the N-terminal section; belongs to the precorrin methyltransferase family. AboMA automethylates at Val-805, Val-807, Thr-808, Val-810, Val-812, Thr-813, Val-815, Val-817, Thr-818, Val-820, Val-822, Thr-823, Val-825, Val-827 and Thr-828, Val-830, Val-832 and T-833 before being processed by a prolyloligopeptidase which likely forms a peptidyl ester upon removal of the follower propeptide, which then undergoes macrocyclization with the N-terminus of the modified core peptide. Peptide backbone alpha-N-methylations change the physicochemical properties of amide bonds to provide structural constraints and other favorable characteristics including biological membrane permeability to peptides.

Its pathway is secondary metabolite biosynthesis. In terms of biological role, fusion protein of the methyltransferase aboM and a type III borosin core peptide; part of the gene cluster that mediates the biosynthesis of a type III borosin, a highly methylated cyclic peptide with potent biological activities. Type III borosins derive from the C-terminus of the fusion protein, and it is the same protein that methylates its own C-terminus using S-adenosyl methionine (SAM). The C-terminus is subsequently cleaved off and macrocyclized by a prolyloligopeptidase to give the final product. In Anomoporia bombycina (Polyporus bombycinus), this protein is Methyltransferase/ribosomally synthesized type III borosin cyclic peptide precursor aboMAa.